Here is a 216-residue protein sequence, read N- to C-terminus: Protein Syd (216 aa).

The protein belongs to the Syd family.

It localises to the cell inner membrane. Its function is as follows. Interacts with the SecY protein in vivo. May bind preferentially to an uncomplexed state of SecY, thus functioning either as a chelating agent for excess SecY in the cell or as a regulatory factor that negatively controls the translocase function. The sequence is that of Protein Syd from Shewanella baltica (strain OS195).